Reading from the N-terminus, the 573-residue chain is Urease subunit alpha 2 (573 aa).

Positions 135-573 (GGMDTHVHYI…ISLNQLYFFS (439 aa)) constitute a Urease domain. Histidine 140, histidine 142, and lysine 223 together coordinate Ni(2+). N6-carboxylysine is present on lysine 223. Substrate is bound at residue histidine 225. Residues histidine 252 and histidine 278 each coordinate Ni(2+). Residue histidine 326 is the Proton donor of the active site. Position 366 (aspartate 366) interacts with Ni(2+).

This sequence belongs to the metallo-dependent hydrolases superfamily. Urease alpha subunit family. In terms of assembly, heterotrimer of UreA (gamma), UreB (beta) and UreC (alpha) subunits. Three heterotrimers associate to form the active enzyme. It depends on Ni cation as a cofactor. Carboxylation allows a single lysine to coordinate two nickel ions.

Its subcellular location is the cytoplasm. It catalyses the reaction urea + 2 H2O + H(+) = hydrogencarbonate + 2 NH4(+). Its pathway is nitrogen metabolism; urea degradation; CO(2) and NH(3) from urea (urease route): step 1/1. Its function is as follows. Disrupting the ure2 operon has no effect on urease activity or pathogen survival in BALB/c mice when administered orally. In Brucella abortus (strain 2308), this protein is Urease subunit alpha 2.